A 156-amino-acid polypeptide reads, in one-letter code: Oxidized purine nucleoside triphosphate hydrolase (156 aa).

Residues 3–132 (TSRLYTLVLV…WFPLLLQKKK (130 aa)) form the Nudix hydrolase domain. Thr-8 is a 2-oxo-dATP binding site. Residues Thr-8, Lys-23, Asn-33, 35-38 (FGGK), and Glu-52 contribute to the 8-oxo-dGTP site. 2-oxo-dATP is bound by residues Asn-33 and 35–38 (FGGK). Mg(2+) is bound by residues Gly-36, Glu-52, Glu-55, Glu-56, and Glu-100. The Nudix box motif lies at 37-58 (GKVQEGETIEDGAKRELLEESG). 8-oxo-dGTP-binding positions include Glu-56, Glu-100, and 117 to 120 (WPDD). 117–120 (WPDD) lines the 2-oxo-dATP pocket.

This sequence belongs to the Nudix hydrolase family. As to quaternary structure, monomer. Mg(2+) is required as a cofactor. High expression levels detected in thymus, liver, spleen, kidney, testis and large intestine, with lower levels detected in brain, heart, lung and stomach (at protein level). Expressed in kidney, liver and small intestine.

The protein localises to the cytoplasm. It is found in the nucleus. Its subcellular location is the nucleus membrane. The protein resides in the cytoplasmic vesicle. It localises to the secretory vesicle. The protein localises to the acrosome. The enzyme catalyses 2-oxo-dATP + H2O = 2-oxo-dAMP + diphosphate + H(+). It carries out the reaction 2-oxo-ATP + H2O = 2-oxo-AMP + diphosphate + H(+). It catalyses the reaction 8-oxo-dGTP + H2O = 8-oxo-dGMP + diphosphate + H(+). The catalysed reaction is 8-oxo-dATP + H2O = 8-oxo-dAMP + diphosphate + H(+). The enzyme catalyses O(6)-methyl-dGTP + H2O = O(6)-methyl-dGMP + diphosphate + H(+). It carries out the reaction N(6)-methyl-dATP + H2O = N(6)-methyl-dAMP + diphosphate + H(+). It catalyses the reaction N(6)-methyl-ATP + H2O = N(6)-methyl-AMP + diphosphate + H(+). Its function is as follows. Oxidized purine nucleoside triphosphate hydrolase which is a prominent sanitizer of the oxidized nucleotide pool. Catalyzes the hydrolysis of 2-oxo-dATP (2-hydroxy-dATP) into 2-oxo-dAMP. Also has a significant hydrolase activity toward 2-oxo-ATP, 8-oxo-dGTP and 8-oxo-dATP. Through the hydrolysis of oxidized purine nucleoside triphosphates, prevents their incorporation into DNA and the subsequent transversions A:T to C:G and G:C to T:A. Also catalyzes the hydrolysis of methylated purine nucleoside triphosphate preventing their integration into DNA. Through this antimutagenic activity protects cells from oxidative stress. This chain is Oxidized purine nucleoside triphosphate hydrolase (Nudt1), found in Mus musculus (Mouse).